Here is a 7071-residue protein sequence, read N- to C-terminus: MESLVLGINEKTHVQLSLPVLQVRDVLVRGFGDSVEEALSEAREHLKSGTCGIVELEKGVLPQPEQPYVFIKRSDAQGTDHGHRVRELVAELDGVQYGRSGITLGVLVPHVGETPIAYRNVLLRKNGNKGAGGHSFGIDLKSYDLGDELGTDPIEDYEQNWNTKHGSGVLRELTRELNGGALTRYVDNNFCGPDGYPLECIKDLLARAGKSMCTLSEQLDYIESKRGVYCCRDHGHEIAWFTERSDKSYEHQTPFEIKSAKKFDTFKGECPKFVFPLNSKVKVIQPRVEKKKTEGFMGRIRSVYPVATPQECNNMHLSTLMKCNHCDEVSWQTCDFLKATCEQCGTENLVSEGPNTCGYLPTNAVVKMPCPACQDPEIGPEHSAADYHNHSNIETRLRKGGRTRCFGGCVFAYVGCYNKRAYWVPRASADIGSGHTGITGDNVETLNEDLLEILSRERVNINIVGDFQLNEEVAIILASFSASTSAFIDTIKSLDYKSFKTIVESCGNYKVTKGKPIKGAWNIGQHRSVLTPLCGFPSQAAGVIRSIFSRTLDAANHSIPDLQRAAVTILDSISEQSLRLVDAMVYTSNLLTNSVIIMAYVTGGLVQQTSQWLSNLLDTTVEKLRPIFAWIEAKLSAGVEFLKDAWEILKFLITGVFDIVKGQIQVASDNIKDCVKCFVDVVNKALEMCIDQVTIAGAKLRSLNLGEVFIAQSKGLYRQCIRGKEQLQLLMPLKAPKEVTFLEGDSHDTVLTSEEVVLKNGELEALETPVDSFTNGAVVGTPVCINGLMLLEIKANEQYCALSPGLLATNNVFRLKGGAPTKGVTFGEDTVVEVQGYKNVRITFELDERVDKVLNEKCSVYTVESGTEVTEFACVVAEAVVKTLQPVSDLLTNMGIDLDEWSVATFYLFDDSGEEKLSSRMYCSFYPPDEEEDCEEYEEEEEVSERTCEHEYGTEEDYKGLPLEFGASTDIIQVEEQEEEDWLDDAVEAEPEPEPLHEEPVNQLTGYLKLTDNVAIKCVDIVEEAQNANPMVIVNAANIHLKHGGGVAGALNKATNGAMQKESDHYIKLNGPLTVGGSCLLSGHNLAKKCLHVVGPNLNAGEDIQLLKAAYENFNSQDILLAPLLSAGIFGAKPLQSLQMCVQTVRTQVYIVVNDKVLYEQVVMDYLDSLKPKVEAPKQEVLPKAEYPKVDEKSVVQKTIDVKPKIKACIDEVTTTLEETKFLTNKLLLFTDINGKLYQDSKNMLRGEDMSFLEKDAPYMVGDVITSGDITCVVIPSKKAGGTTEMLSRALKKVPINEYITTYPGQGCAGYTLEEAKTALKKCKSAFYVLPSETPNAKEEILGTVSWNLREMLAHAEETRKLMPVCMDVRAIMATIQRKYKGIKIQEGIVDYGVRFFFYTSKEPVASIITKLNSLNEPLVTMPIGYVTHGFNLEEAARCMRSLKAPAIVSVSSPDAVTTYNGYLTSSSKTSEDHFVETVSLAGSYRDWSYSGQRTELGVEFLKRGEKIVYHTLESPVKFHLDGEVLPLDKLKSLLSLREVKTIKVFTTVDNTNLHTQLVDMSMTYGQQLGPTYLEGADVTKIKPHVNHEGKTFFVLPSDDTLRSEAFEYYHTLDESFLGRYMSALNHTKKWKFPQVGGLTSIKWADNNCYLSSVLLALQQIEVKFNAPALQEAYYRARAGDAANFCALILAYSNKTVGELGDVRETMTHLLQHANLESAKRVLNVVCKHCGQKTTTLTGVEAVMYMGTLSYDNLKMGVSIPCVCGRDATQYLVQQESSFVMMSAPPAEYKLQQGTFLCANEYTGNYQCGHYTHITAKETLYRIDGAHLTKMSEYKGPVTDVFYKETSYTTTIKPVSYKLDGVTYTEIEPKLDGYYKKDNAYYTEQPIDLIPTQPLPNASFDNFKLTCSNTKFADDLNQMTGFTKPASRELSVTFFPDLNGDVVAIDYRHYSASFKKGAKLLHKPIVWHINQATTKTTFKPNTWCLRCLWSTKPVDTSNSFEVLAVEDTQGMDNLACESQQPTPEEVVENPTIQKEVIECDVKTTEVVGNVILKPSDEGVKVTQELDHEDLMAAYVENTSITIKKPNELSLALGLKTIATHGIAAINSVPWGKILAYVKPFLGQAAVTTSNCAKRLVQRMFNNYMPYVLTLLFQLCTFTKSTNSRIRASLPTTIAKNSVRGIVRLCLDAGINYVKSPKFSKLFTIAMWLLLLSICLGSLIYVTAALGVLLSNFGAPSYCSGVRESYLNSSNVTTMDFCEGSFPCSVCLSGLDSLDSYPALETIQVTISSYKLDLTILGLAAEWFFAYMLFTKFFYLLGLSAIMQVFFGYFASHFISNSWLMWFIISIVQMAPVSAMVRMYIFFASFYYIWKSYVHIMDGCTSSTCMMCYKRNRATRVECTTIVNGMKRSFYVYANGGRGFCKTHNWNCLNCDTFCAGSTFISDEVARDLSLQFKRPINPTDQSSYVVDSVAVKNGALHLYFDKAGQKTYERHPLSHFVNLDNLRANNTKGSLPINVIVFDGKSKCDESAAKSASVYYSQLMCQPILLLDQALVSDVGDSTEVSVKMFDAYVDTFSATFSVPMEKLKALVATAHSELAKGVALDGVLSTFVSASRQGVVDTDVDTKDVIECLKLSHHSDLEVTGDSCNNFMLTYNKVENMTPRDLGACIDCNARHINAQVARSHNVSLIWNVKDYMSLSEQLRKQIRSAAKKNNIPFRLTCATTRQVVNVITTKISLKGGKIVSTWFKIMLKATLLCVLAALVCYIVMPVHILSVHGGYTNEIIGYKAIQDGVTRDIVSTDDCFANKHAGFDSWFSQRGGSYKNDKSCPVVAAIITREIGFIVPGLPGTVLRAINGDFLHFLPRVFSAVGNICYTPSKLIEYSDFSTSACVLAAECTIFKDAMGKPVPYCYDTNLLEGSISYSELRPDTRYVLMDGSIIQFPNAYLEGSVRVVTTFDAEYCRHGTCERSEAGICLSTSGRWVLNNEHYRALPGVFCGVDAMNLIANIFTPLVQPVGALDVSASVVAGGIIAILVTCAAYYFMKFRRAFGEYNHVVAANAPLFLMSFTILCLAPAYSFLPGVYSVFYLYLTFYFTNDVSFLAHLQWFAMFSPIVPFWITAIYVFCISLKHFHWFFNNYLRKRVVFNGVTFSTFEEAALCTFLLNKEMYLKLRSETLLPLTQYNRYLALYNKYKYFSGALDTTSYREAACCHLAKALNDFSNSGADVLYQPPQTSITSAVLQSGFRKMAFPSGKVEGCMVQVTCGTTTLNGLWLDDTVYCPRHVICTAEDMLNPNYEDLLIRKSNHSFLVQAGNVQLRVIGHSMQNCLLRLKVDTSNPKTPKYKFVRIQPGQTFSVLACYNGSPSGVYQCAMRPNHTIKGSFLNGSCGSVGFNIDYDCVSFCYMHHMELPTEVHAGTDLEGKFYGPFVDRQTAQAAGTDTTITLNVLAWLYAAVINGDRWFLNRFTTTLNDFNLVAMKYNYEPLTQDHVDILGPLSAQTGIAVLDMCAALKELLQNGMNGRTILGSTILEDEFTPFDVVRQCSGVTFQGKFKRIVKGTHHWMLLTFLTSLLILVQSTQWSLFFFVYENAFLPFTLGIMAVAACAMLLVKHKHAFLCLFLLPSLATVAYFNMVYMPASWVMRIMTWLELADTSLSGYRLKDCVMYASALVLLVLMTARTVYDDAARRVWTLMNVITLVYKVYYGNALDQAISMWALVISVTSNYSGVVTTIMFLARAIVFVCVEYYPLLFITGNTLQCIMLVYCFLGYCCCCYFGLFCLLNRYFRLTLGVYDYLVSTQEFRYMNSQGLLPPKSSIDAFKLNIKLLGIGGKPCIKVATVQSKMSDVKCTSVVLLSVLQQLRVESSSKLWAQCVQLHNDILLAKDTTEAFEKMVSLLSVLLSMQGAVDINKLCEEMLDNRATLQAIASEFSSLPSYAAYATAQEAYEQAVANGDSEVVLKKLKKSLNVAKSEFDRNAAMQRKLEKMADQAMTQMYKQARSEDKRAKVTSAMQTMLFTMLRKLDNDALNNIINNARDGCVPLNIIPLTTAAKLMVVVPDYGTYKNTCDGNTFTYASALWEIQQVVDADSKIVQLSEINMENSSNLAWPLIVTALRANSAVKLQNNELSPVALRQMSCAAGTTQTACTDDNALAYYNNSKGGRFVLALLSDHQDLKWARFPKSDGTGTIYTELEPPCRFVTDTPKGPKVKYLHFIKGLNNLNRGMVLGSLAATVRLQAGNATEVPANSTVLSFCAFAVDPAKAYKDYLASGGQPITNCVKMLCTHTGTGQAITVTPEANMDQESFGGASCCLYCRCHIDHPNPKGFCDLKGKYVQIPTTCANDPVGFTLRNTVCTVCGMWKGYGCSCDQLREPMMQSADASTFLNRVCGVSAARLTPCGTGISTDVVYRAFDIYNEKVAGFAKFLKTNCCRFQEKDEEGNLLDSYFVVKRHTMSNYQHEETIYNLVKDCPAVAVHDFFKFRVDGDMVPHISRQRLTKYTMADLVYALRHFDEGNCDTLKEILVTYNCCDDDYFNKKDWYDFVENPDILRVYANLGERVRQALLKTVQFCDAMRDAGIVGVLTLDNQDLNGNWYDFGDFVQVAPGCGVPIVDSYYSLLMPILTLTRALAAESHMDADLAKPLIKWDLLKYDFTAERLCLFDRYFKYWDQTYHPNCINCLDDRCILHCANFNVLFSTVFPPTSFGPLVRKIFVDGVPFVVSTGYHFRELGVVHNQDVNLHSSRLSFKELLVYAADPAMHAASGNLLLDKRTTCFSVAALTNNVAFQTVKPGNFNKDFYDFAVSKGFFKEGSSVELKHFFFAQDGNAAISDYDYYRYNLPTMCDIRQLLFVVEVVDKYFDCYDGGCINANQVIVNNLDKSAGFPFNKWGKARLYYDSMSYEDQDALFAYTKRNVIPTITQMNLKYAISAKNRARTVAGVSICSTMTNRQFHQKLLKSIAATRGATVVIGTSKFYGGWHNMLKTVYSDVETPHLMGWDYPKCDRAMPNMLRIMASLVLARKHSTCCNLSHRFYRLANECAQVLSEMVMCGGSLYVKPGGTSSGDATTAYANSVFNICQAVTANVNALLSTDGNKIADKYVRNLQHRLYECLYRNRDVDHEFVGEFYAYLRKHFSMMILSDDAVVCYNSNYAAQGLVASIKNFKAVLYYQNNVFMSEAKCWTETDLTKGPHEFCSQHTMLVKQGDDYVYLPYPDPSRILGAGCFVDDIVKTDGTLMIERFVSLAIDAYPLTKHPNQEYADVFHLYLQYIRKLHDELTGHMLDMYSVMLTNDNTSRYWEPEFYEAMYTPHTVLQAVGACVLCNSQTSLRCGACIRRPFLCCKCCYDHVISTSHKLVLSVNPYVCNAPGCDVTDVTQLYLGGMSYYCKSHKPPISFPLCANGQVFGLYKNTCVGSDNVTDFNAIATCDWTNAGDYILANTCTERLKLFAAETLKATEETFKLSYGIATVREVLSDRELHLSWEVGKPRPPLNRNYVFTGYRVTKNSKVQIGEYTFEKGDYGDAVVYRGTTTYKLNIGDYFVLTSHTVMPLSAPTLVPQEHYVRITGLYPTLNISDEFSSNVANYQKVGMQKYSTLQGPPGTGKSHFAIGLALYYPSARIVYTACSHAAVDALCEKALKYLPIDKCSRIIPARARVECFDKFKVNSTLEQYVFCTVNALPETTADIVVFDEISMATNYDLSVVNARLRAKHYVYIGDPAQLPAPRTLLTKGTLEPEYFNSVCRLMKTIGPDMFLGTCRRCPAEIVDTVSALVYDNKLKAHKEKSAQCFKMFYKGVITHDVSSAINRPQIGVVREFLTRNPAWRKAVFISPYNSQNAVASKILGLPTQTVDSSQGSEYDYVIFTQTTETAHSCNVNRFNVAITRAKIGILCIMSDRDLYDKLQFTSLEVPRRNVATLQAENVTGLFKDCSKIITGLHPTQAPTHLSVDTKFKTEGLCVDIPGIPKDMTYRRLISMMGFKMNYQVNGYPNMFITREEAIRHVRAWIGFDVEGCHATRDAVGTNLPLQLGFSTGVNLVAIPTGYVDTENNTEFTRVNAKPPPGDQFKHLIPLMYKGLPWNVVRIKIVQMLSDTLKGLSDRVVFVLWAHGFELTSMKYFVKIGPERTCCLCDKRATCFSTSSDTYACWNHSVGFDYVYNPFMIDVQQWGFTGNLQSNHDQHCQVHGNAHVASCDAIMTRCLAVHECFVKRVDWSVEYPIIGDELKINSACRKVQHMVVKSALLADKFPVLHDIGNPKAIKCVPQAEVEWKFYDAQPCSDKAYKIEELFYSYATHHDKFTDGVCLFWNCNVDRYPANAIVCRFDTRVLSNLNLPGCDGGSLYVNKHAFHTPAFDKSAFTNLKQLPFFYYSDSPCESHGKQVVSDIDYVPLKSATCITRCNLGGAVCRHHANEYRQYLDAYNMMISAGFSLWIYKQFDTYNLWNTFTRLQSLENVAYNVVNKGHFDGQAGETPVSIINNAVYTKVDGFDVEIFENKTTLPVNVAFELWAKRNIKSVPEIKILNNLGVDIAANTVIWDHKREAPVHMSTIGVCTMTDIAKKPTESACSSLTVLFDGRVEGQVDLFRNARNGVLITEGSVKGLTPSKGPAQASVNGVTLIGESVKTQFNYFKKVDGIIQQLPETYFTQSRDLEDFKPRSQMETDFLELAMDEFIQRYKLEGYAFEHIVYGDFSHGQLGGLHLMIGLAKRSRDSPLKLEDFIPMDSTVKNYFITDAQTGSSKCVCSVIDLLLDDFVEIIKSQDLSVVSKVVKVTIDYAEISFMLWCKDGHVETFYPKLQASQAWQPGVAMPNLYKMQRMLLEKCDLQNYGENAVIPKGIMMNVAKYTQLCQYLNTLTLAVPYNMRVIHFGAGSDKGVAPGTAVLRQWLPTGTLLVDSDLNDFVSDADSTLIGDCATVHTANKWDLIVSDMYDPKAKHVTKENDSKEGFFTYLCGFIKQKLALGGSVAVKITEHSWNADLYKLMGHFSWWTAFVTNVNASSSEAFLIGVNYLGKPKEQIDGYTMHANYIFWRNTNPIQLSSYSLFDMSKFPLKLRGTAVMSLKENQINDMIYSLLEKGRLIIRENNRVVVSSDILVNN.

Residues 12–127 (THVQLSLPVL…YRNVLLRKNG (116 aa)) form the CoV Nsp1 globular domain. The BetaCoV Nsp1 C-terminal domain maps to 148–179 (ELGTDPIEDYEQNWNTKHGSGVLRELTRELNG). A CoV Nsp2 N-terminal domain is found at 183 to 456 (TRYVDNNFCG…NEDLLEILSR (274 aa)). Zn(2+) contacts are provided by C200, C231, H234, H236, C323, C326, C341, C344, C370, C373, H382, and C416. Residues 200 to 236 (CIKDLLARAGKSMCTLSEQLDYIESKRGVYCCRDHGH) form a C2H2 region. The interval 323 to 344 (CNHCDEVSWQTCDFLKATCEQC) is C4. The tract at residues 370-416 (CPACQDPEIGPEHSAADYHNHSNIETRLRKGGRTRCFGGCVFAYVGC) is C2HC. The CoV Nsp2 middle domain occupies 458–688 (RVNINIVGDF…VDVVNKALEM (231 aa)). Residues 690-818 (IDQVTIAGAK…TNNVFRLKGG (129 aa)) enclose the CoV Nsp2 C-terminal domain. The Ubiquitin-like 1 domain occupies 822-930 (KGVTFGEDTV…MYCSFYPPDE (109 aa)). 3 Macro domains span residues 1001–1167 (VNQL…MDYL), 1205–1333 (KIKA…LPSE), and 1341–1468 (ILGT…TSSS). Positions 1470–1536 (TSEDHFVETV…PLDKLKSLLS (67 aa)) constitute a DPUP domain. Residues 1540–1595 (VKTIKVFTTVDNTNLHTQLVDMSMTYGQQLGPTYLEGADVTKIKPHVNHEGKTFFV) form the Ubiquitin-like 2 domain. The region spanning 1609–1873 (YYHTLDESFL…YTEIEPKLDG (265 aa)) is the Peptidase C16 domain. The active-site For PL-PRO activity is the C1649. Zn(2+) is bound by residues C1727, C1730, C1762, and C1764. Residues 1727-1764 (CKHCGQKTTTLTGVEAVMYMGTLSYDNLKMGVSIPCVC) form a C4-type zinc finger. Active-site for PL-PRO activity residues include H1810 and D1824. Residues 1886 to 1996 (PIDLIPTQPL…CLWSTKPVDT (111 aa)) form the Nucleic acid-binding domain. The G2M domain occupies 2021-2130 (PTPEEVVENP…LGQAAVTTSN (110 aa)). The helical transmembrane segment at 2201–2221 (LFTIAMWLLLLSICLGSLIYV) threads the bilayer. An HD1 region spans residues 2201-2369 (LFTIAMWLLL…IFFASFYYIW (169 aa)). In terms of domain architecture, 3Ecto spans 2222-2292 (TAALGVLLSN…QVTISSYKLD (71 aa)). Intrachain disulfides connect C2238-C2266 and C2257-C2263. 2 consecutive transmembrane segments (helical) span residues 2312 to 2334 (FFYL…SHFI) and 2349 to 2369 (MAPV…YYIW). The Y1 stretch occupies residues 2370–2460 (KSYVHIMDGC…QFKRPINPTD (91 aa)). A CoV Nsp3 Y domain is found at 2370 to 2738 (KSYVHIMDGC…ITTKISLKGG (369 aa)). Zn(2+) is bound by residues H2374, C2379, C2384, C2387, C2420, H2423, C2427, and C2430. Residues 2374-2387 (HIMDGCTSSTCMMC) are ZF1. The ZF2 stretch occupies residues 2420-2430 (CKTHNWNCLNC). The interval 2461–2555 (QSSYVVDSVA…LLDQALVSDV (95 aa)) is Y2. Residues 2461 to 2738 (QSSYVVDSVA…ITTKISLKGG (278 aa)) form a coV-Y region. Positions 2556 to 2637 (GDSTEVSVKM…ECLKLSHHSD (82 aa)) are Y3. Residues 2638-2738 (LEVTGDSCNN…ITTKISLKGG (101 aa)) form a Y4 region. The next 6 membrane-spanning stretches (helical) occupy residues 2753 to 2773 (LLCV…ILSV), 3020 to 3040 (ASVV…YYFM), 3059 to 3079 (LFLM…LPGV), 3081 to 3101 (SVFY…LAHL), 3103 to 3123 (WFAM…VFCI), and 3140 to 3160 (VVFN…TFLL). The tract at residues 2753–3160 (LLCVLAALVC…EEAALCTFLL (408 aa)) is HD2. The 99-residue stretch at 3140 to 3238 (VVFNGVTFST…QTSITSAVLQ (99 aa)) folds into the Nsp4C domain. The 306-residue stretch at 3239–3544 (SGFRKMAFPS…VRQCSGVTFQ (306 aa)) folds into the Peptidase C30 domain. Residues H3279 and C3383 each act as for 3CL-PRO activity in the active site. Helical transmembrane passes span 3562–3582 (FLTS…FFVY), 3584–3604 (NAFL…MLLV), 3610–3630 (FLCL…MVYM), 3657–3676 (CVMY…RTVY), 3683–3702 (VWTL…GNAL), 3726–3746 (IMFL…LLFI), and 3754–3774 (IMLV…LFCL). The HD3 stretch occupies residues 3562-3774 (FLTSLLILVQ…CCCYFGLFCL (213 aa)). One can recognise a RdRp Nsp7 cofactor domain in the interval 3835-3917 (SKMSDVKCTS…EMLDNRATLQ (83 aa)). Residues 3918–4115 (AIASEFSSLP…LRANSAVKLQ (198 aa)) enclose the RdRp Nsp8 cofactor domain. The region spanning 4116 to 4228 (NNELSPVALR…GSLAATVRLQ (113 aa)) is the Nsp9 ssRNA-binding domain. The region spanning 4229-4367 (AGNATEVPAN…CDQLREPMMQ (139 aa)) is the ExoN/MTase coactivator domain. Zn(2+)-binding residues include C4302, C4305, H4311, C4318, C4345, C4348, C4356, and C4358. 2 zinc fingers span residues 4302 to 4318 (CLYC…KGFC) and 4345 to 4358 (CTVC…GCSC). The region spanning 4374–4628 (FLNRVCGVSA…AAESHMDADL (255 aa)) is the NiRAN domain. Mn(2+)-binding residues include N4576 and D4585. The region spanning 4633 to 4731 (IKWDLLKYDF…HNQDVNLHSS (99 aa)) is the Nsp12 Interface domain. The Zn(2+) site is built by H4662, C4668, C4673, C4677, and C4854. The 568-residue stretch at 4732–5299 (RLSFKELLVY…AMYTPHTVLQ (568 aa)) folds into the Nsp12 RNA-dependent RNA polymerase domain. The interval 4734-4948 (SFKELLVYAA…HQKLLKSIAA (215 aa)) is rdRp Fingers N-ter. The rdRp Palm N-ter stretch occupies residues 4949–4987 (TRGATVVIGTSKFYGGWHNMLKTVYSDVETPHLMGWDYP). A RdRp catalytic domain is found at 4979 to 5141 (PHLMGWDYPK…CYNSNYAAQG (163 aa)). Residues 4988 to 5046 (KCDRAMPNMLRIMASLVLARKHSTCCNLSHRFYRLANECAQVLSEMVMCGGSLYVKPGG) are rdRp Fingers C-ter. Zn(2+) contacts are provided by H5009, C5012, and C5013. The segment at 5047 to 5182 (TSSGDATTAY…TKGPHEFCSQ (136 aa)) is rdRp Palm C-ter. Residues S5126, D5127, and D5128 contribute to the active site. The interval 5183 to 5299 (HTMLVKQGDD…AMYTPHTVLQ (117 aa)) is rdRp Thumb. Positions 5300-5412 (AVGACVLCNS…TDFNAIATCD (113 aa)) constitute a CV ZBD domain. Positions 5304, 5307, 5315, 5318, 5325, 5328, 5332, 5338, 5349, 5354, 5371, and 5374 each coordinate Zn(2+). The region spanning 5556-5737 (NISDEFSSNV…MKTIGPDMFL (182 aa)) is the (+)RNA virus helicase ATP-binding domain. Residue 5581 to 5588 (GPPGTGKS) coordinates ATP. The region spanning 5738-5907 (GTCRRCPAEI…TLQAENVTGL (170 aa)) is the (+)RNA virus helicase C-terminal domain. The 216-residue stretch at 5972–6187 (MFITREEAIR…RCLAVHECFV (216 aa)) folds into the ExoN domain. Active-site residues include D5990, E5992, and E6091. Residues C6107, C6110, C6126, H6129, H6157, C6161, and H6164 each coordinate Zn(2+). Catalysis depends on residues H6168 and D6173. C6179 is a Zn(2+) binding site. Positions 6196-6427 (YPIIGDELKI…NLWNTFTRLQ (232 aa)) constitute an N7-MTase domain. 6231 to 6237 (DIGNPKA) lines the S-adenosyl-L-methionine pocket. The tract at residues 6314-6328 (CDGGSLYVNKHAFHT) is gpppA-binding. Zn(2+) is bound by residues C6352, C6373, C6384, and H6387. The Nsp15 N-terminal oligomerization domain maps to 6428–6488 (SLENVAYNVV…NVAFELWAKR (61 aa)). Positions 6489-6614 (NIKSVPEIKI…YFKKVDGIIQ (126 aa)) constitute an AV-Nsp11N/CoV-Nsp15M domain. A NendoU domain is found at 6631 to 6770 (KPRSQMETDF…KDGHVETFYP (140 aa)). Catalysis depends on residues H6661, H6676, K6716, K6819, D6903, K6943, and E6976. Positions 6775–7069 (SQAWQPGVAM…RVVVSSDILV (295 aa)) constitute a Nidovirus-type SAM-dependent 2'-O-MTase domain.

Belongs to the coronaviruses polyprotein 1ab family. Interacts with host PHB and PHB2. In terms of assembly, interacts with papain-like protease nsp3 and non-structural protein 6. As to quaternary structure, monomer. Homodimer. Only the homodimer shows catalytic activity. Interacts with nsp8 and nsp12 to form the replication-transcription complex (RTC): nsp12, nsp7, two subunits of nsp8, and up to two subunits of nsp13. In terms of assembly, interacts with nsp7, nsp13 and nsp12 to form the replication-transcription complex (RTC): nsp12, nsp7, two subunits of nsp8, and up to two subunits of nsp13. As to quaternary structure, interacts with nsp12. Interacts with proofreading exoribonuclease nsp14 and 2'-O-methyltransferase nsp16; these interactions enhance nsp14 and nsp16 enzymatic activities. In terms of assembly, interacts with nsp7 and nsp8 to form the replication-transcription complex (RTC): nsp12, nsp7, two subunits of nsp8, and up to two subunits of nsp13. Interacts with nsp9. As to quaternary structure, interacts with nsp8 to form the replication-transcription complex (RTC): nsp12, nsp7, two subunits of nsp8, and up to two subunits of nsp13. The cofactor is Mn(2+). Mg(2+) is required as a cofactor. Specific enzymatic cleavages in vivo by its own proteases yield mature proteins. 3CL-PRO and PL-PRO proteinases are autocatalytically processed.

It is found in the host membrane. It localises to the host cytoplasm. Its subcellular location is the host perinuclear region. The protein resides in the host endoplasmic reticulum-Golgi intermediate compartment. It carries out the reaction RNA(n) + a ribonucleoside 5'-triphosphate = RNA(n+1) + diphosphate. The enzyme catalyses ATP + H2O = ADP + phosphate + H(+). It catalyses the reaction Thiol-dependent hydrolysis of ester, thioester, amide, peptide and isopeptide bonds formed by the C-terminal Gly of ubiquitin (a 76-residue protein attached to proteins as an intracellular targeting signal).. The catalysed reaction is a 5'-end (N(7)-methyl 5'-triphosphoguanosine)-ribonucleoside in mRNA + S-adenosyl-L-methionine = a 5'-end (N(7)-methyl 5'-triphosphoguanosine)-(2'-O-methyl-ribonucleoside) in mRNA + S-adenosyl-L-homocysteine + H(+). It carries out the reaction uridylyl-uridylyl-ribonucleotide-RNA = a 3'-end uridylyl-2',3'-cyclophospho-uridine-RNA + a 5'-end dephospho-ribonucleoside-RNA. The enzyme catalyses a 5'-end diphospho-ribonucleoside in mRNA + GTP + H(+) = a 5'-end (5'-triphosphoguanosine)-ribonucleoside in mRNA + diphosphate. It catalyses the reaction a 5'-end (5'-triphosphoguanosine)-ribonucleoside in mRNA + S-adenosyl-L-methionine = a 5'-end (N(7)-methyl 5'-triphosphoguanosine)-ribonucleoside in mRNA + S-adenosyl-L-homocysteine. In terms of biological role, the replicase polyprotein of coronaviruses is a multifunctional protein: it contains the activities necessary for the transcription of negative stranded RNA, leader RNA, subgenomic mRNAs and progeny virion RNA as well as proteinases responsible for the cleavage of the polyprotein into functional products. Inhibits host translation by interacting with the 40S ribosomal subunit. The nsp1-40S ribosome complex further induces an endonucleolytic cleavage near the 5'UTR of host mRNAs, targeting them for degradation. Viral mRNAs are not susceptible to nsp1-mediated endonucleolytic RNA cleavage thanks to the presence of a 5'-end leader sequence and are therefore protected from degradation. By suppressing host gene expression, nsp1 facilitates efficient viral gene expression in infected cells and evasion from host immune response. Functionally, may play a role in the modulation of host cell survival signaling pathway by interacting with host PHB and PHB2. Indeed, these two proteins play a role in maintaining the functional integrity of the mitochondria and protecting cells from various stresses. Its function is as follows. Responsible for the cleavages located at the N-terminus of the replicase polyprotein. In addition, PL-PRO possesses a deubiquitinating/deISGylating activity and processes both 'Lys-48'- and 'Lys-63'-linked polyubiquitin chains from cellular substrates. Participates together with nsp4 in the assembly of virally-induced cytoplasmic double-membrane vesicles necessary for viral replication. Antagonizes innate immune induction of type I interferon by blocking the phosphorylation, dimerization and subsequent nuclear translocation of host IRF3. Also prevents host NF-kappa-B signaling. In terms of biological role, participates in the assembly of virally-induced cytoplasmic double-membrane vesicles necessary for viral replication. Cleaves the C-terminus of replicase polyprotein at 11 sites. Recognizes substrates containing the core sequence [ILMVF]-Q-|-[SGACN]. Also able to bind an ADP-ribose-1''-phosphate (ADRP). Functionally, plays a role in the initial induction of autophagosomes from host endoplasmic reticulum. Later, limits the expansion of these phagosomes that are no longer able to deliver viral components to lysosomes. Its function is as follows. Forms a hexadecamer with nsp8 (8 subunits of each) that may participate in viral replication by acting as a primase. Alternatively, may synthesize substantially longer products than oligonucleotide primers. In terms of biological role, forms a hexadecamer with nsp7 (8 subunits of each) that may participate in viral replication by acting as a primase. Alternatively, may synthesize substantially longer products than oligonucleotide primers. Forms a primer, NSP9-pU, which is utilized by the polymerase for the initiation of RNA chains. Interacts with ribosome signal recognition particle RNA (SRP). Together with NSP8, suppress protein integration into the cell membrane, thereby disrupting host immune defenses. Functionally, plays a pivotal role in viral transcription by stimulating both nsp14 3'-5' exoribonuclease and nsp16 2'-O-methyltransferase activities. Therefore plays an essential role in viral mRNAs cap methylation. Its function is as follows. RNA-directed RNA polymerase that catalyzes the transcription of viral genomic and subgenomic RNAs. Acts in complex with nsp7 and nsp8 to transcribe both the minus and positive strands of genomic RNA. The kinase-like NiRAN domain of NSP12 attaches one or more nucleotides to the amino terminus of NSP9, forming a covalent RNA-protein intermediate that serves as transcription/replication primer. Subgenomic RNAs (sgRNAs) are formed by discontinuous transcription: The polymerase has the ability to pause at transcription-regulating sequences (TRS) and jump to the leader TRS, resulting in a major deletion. This creates a series of subgenomic RNAs that are replicated, transcribed and translated. In addition, Nsp12 is a subunit of the viral RNA capping enzyme that catalyzes the RNA guanylyltransferase reaction for genomic and sub-genomic RNAs. Subsequently, the NiRAN domain transfers RNA to GDP, and forms the core cap structure GpppA-RNA. In terms of biological role, multi-functional protein with a zinc-binding domain in N-terminus displaying RNA and DNA duplex-unwinding activities with 5' to 3' polarity. Activity of helicase is dependent on magnesium. Plays a role in viral RNA synthesis through two distinct activities. The N7-guanine methyltransferase activity plays a role in the formation of the cap structure GpppA-RNA. The proofreading exoribonuclease reduces the sensitivity of the virus to RNA mutagens during replication. This activity acts on both ssRNA and dsRNA in a 3'-5' direction. Functionally, plays a role in viral transcription/replication and prevents the simultaneous activation of host cell dsRNA sensors, such as MDA5/IFIH1, OAS, and PKR. Acts by degrading the 5'-polyuridines generated during replication of the poly(A) region of viral genomic and subgenomic RNAs. Catalyzes a two-step reaction in which a 2'3'-cyclic phosphate (2'3'-cP) is first generated by 2'-O transesterification, which is then hydrolyzed to a 3'-phosphate (3'-P). If not degraded, poly(U) RNA would hybridize with poly(A) RNA tails and activate host dsRNA sensors. Its function is as follows. Methyltransferase that mediates mRNA cap 2'-O-ribose methylation to the 5'-cap structure of viral mRNAs. N7-methyl guanosine cap is a prerequisite for binding of nsp16. Therefore plays an essential role in viral mRNAs cap methylation which is essential to evade immune system. The protein is Replicase polyprotein 1ab (rep) of Rhinolophus ferrumequinum (Greater horseshoe bat).